We begin with the raw amino-acid sequence, 488 residues long: Glutamyl-tRNA(Gln) amidotransferase subunit A (488 aa).

Residues Lys77 and Ser152 each act as charge relay system in the active site. Ser176 functions as the Acyl-ester intermediate in the catalytic mechanism.

The protein belongs to the amidase family. GatA subfamily. In terms of assembly, heterotrimer of A, B and C subunits.

The catalysed reaction is L-glutamyl-tRNA(Gln) + L-glutamine + ATP + H2O = L-glutaminyl-tRNA(Gln) + L-glutamate + ADP + phosphate + H(+). Functionally, allows the formation of correctly charged Gln-tRNA(Gln) through the transamidation of misacylated Glu-tRNA(Gln) in organisms which lack glutaminyl-tRNA synthetase. The reaction takes place in the presence of glutamine and ATP through an activated gamma-phospho-Glu-tRNA(Gln). The chain is Glutamyl-tRNA(Gln) amidotransferase subunit A from Streptococcus thermophilus (strain CNRZ 1066).